The sequence spans 323 residues: Alpha-tubulin N-acetyltransferase 1 (323 aa).

The N-acetyltransferase domain occupies 1-190 (MEFPFDVDAL…NNFVIFEGFF (190 aa)). Lysine 56 is modified (N6-acetyllysine; by autocatalysis). Residue 124 to 137 (FYIHESVQRHGHGR) participates in acetyl-CoA binding. Lysine 146 is modified (N6-acetyllysine; by autocatalysis). 160 to 169 (SQKLLKFLNK) contacts acetyl-CoA. Residues 196 to 239 (PPAPSLRATRHSRAAAVDPTPTAPARKLPPKRAEGDIKPYSSSD) form a disordered region. The segment covering 209-220 (AAAVDPTPTAPA) has biased composition (low complexity). A compositionally biased stretch (basic and acidic residues) spans 226 to 239 (KRAEGDIKPYSSSD). An N6-acetyllysine; by autocatalysis mark is found at lysine 233 and lysine 244. Residues 252–287 (PLNRAPRRATPPAHPPPRSSSLGNSPERGPLRPFVP) form a disordered region. 2 positions are modified to phosphoserine: serine 272 and serine 276. Arginine 305 is subject to Asymmetric dimethylarginine. A Phosphoserine modification is found at serine 315. Arginine 323 bears the Omega-N-methylarginine mark.

This sequence belongs to the acetyltransferase ATAT1 family. As to quaternary structure, component of the BBSome complex. Interacts with AP2 alpha-adaptins, including AP2A2, but not with AP1 gamma-adaptin (AP1G1/AP1G2); this interaction is required for efficient alpha-tubulin acetylation, hence clathrin-coated pits are sites of microtubule acetylation. Autoacetylation strongly increases tubulin acetylation.

Its subcellular location is the cytoplasm. The protein resides in the membrane. It localises to the clathrin-coated pit. The protein localises to the cell junction. It is found in the focal adhesion. Its subcellular location is the cell projection. The protein resides in the axon. It localises to the cytoskeleton. The protein localises to the spindle. The catalysed reaction is L-lysyl-[alpha-tubulin] + acetyl-CoA = N(6)-acetyl-L-lysyl-[alpha-tubulin] + CoA + H(+). Its function is as follows. Specifically acetylates 'Lys-40' in alpha-tubulin on the lumenal side of microtubules. Promotes microtubule destabilization and accelerates microtubule dynamics; this activity may be independent of acetylation activity. Acetylates alpha-tubulin with a slow enzymatic rate, due to a catalytic site that is not optimized for acetyl transfer. Enters the microtubule through each end and diffuses quickly throughout the lumen of microtubules. Acetylates only long/old microtubules because of its slow acetylation rate since it does not have time to act on dynamically unstable microtubules before the enzyme is released. Required for normal sperm flagellar function. Promotes directional cell locomotion and chemotaxis, through AP2A2-dependent acetylation of alpha-tubulin at clathrin-coated pits that are concentrated at the leading edge of migrating cells. May facilitate primary cilium assembly. This is Alpha-tubulin N-acetyltransferase 1 from Macaca mulatta (Rhesus macaque).